We begin with the raw amino-acid sequence, 20 residues long: Agglutinin beta-2 chain (20 aa).

Residues 1-20 (GRNGKSQSIIVGPWGDRVTN) are disordered.

This sequence belongs to the jacalin lectin family. Formed of four alpha chains and four beta chains.

In terms of biological role, D-galactose-specific lectin, binds the T-antigen structure Gal-beta1,3-GalNAc. The polypeptide is Agglutinin beta-2 chain (Maclura pomifera (Osage orange)).